The following is a 512-amino-acid chain: Ferrochelatase-2, chloroplastic (512 aa).

Residues 1–32 (MNCPAMTASPSSSSSSSYSTFRPPPPLLPQLS) form a disordered region. The transit peptide at 1-83 (MNCPAMTASP…SNPLNISSSS (83 aa)) directs the protein to the chloroplast. The segment covering 9–21 (SPSSSSSSSYSTF) has biased composition (low complexity). Valine 84 is modified (N-acetylvaline).

Belongs to the ferrochelatase family. As to expression, expressed in leaves and flowers.

Its subcellular location is the plastid. It localises to the chloroplast membrane. The protein resides in the chloroplast thylakoid membrane. It catalyses the reaction heme b + 2 H(+) = protoporphyrin IX + Fe(2+). Its pathway is porphyrin-containing compound metabolism; protoheme biosynthesis; protoheme from protoporphyrin-IX: step 1/1. Its function is as follows. Catalyzes the last step of heme biosynthesis by inserting ferrous iron into protoporphyrin IX to produce protoheme. Produces heme for photosynthetic cytochromes, and for proteins involved in abiotic and biotic stress responses. May play a role in the quality control of individual chloroplasts during photo-oxidative stress through regulation of heme biosynthesis. The chain is Ferrochelatase-2, chloroplastic from Arabidopsis thaliana (Mouse-ear cress).